The sequence spans 394 residues: Enoyl-CoA delta isomerase 2 (394 aa).

The transit peptide at 1–38 (MAMAYLAWRLARRSCPSSLQVTSFPVVQLHMNRTAMRA) directs the protein to the mitochondrion. One can recognise an ACB domain in the interval 39–124 (SQKDFENSMN…VSSLSPSLES (86 aa)). At lysine 51 the chain carries N6-acetyllysine; alternate. Lysine 51 carries the post-translational modification N6-succinyllysine; alternate. Lysine 55 carries the post-translational modification N6-succinyllysine. N6-acetyllysine; alternate is present on lysine 62. An N6-succinyllysine; alternate modification is found at lysine 62. An an acyl-CoA-binding site is contributed by 66 to 70 (YALYK). N6-succinyllysine is present on residues lysine 70, lysine 81, and lysine 90. Lysine 92 is subject to N6-acetyllysine; alternate. N6-succinyllysine; alternate is present on lysine 92. Residue lysine 92 coordinates an acyl-CoA. The residue at position 101 (serine 101) is a Phosphoserine. Tyrosine 111 provides a ligand contact to an acyl-CoA. Serine 119 is modified (phosphoserine). The tract at residues 151–322 (TKIMFNRPKK…AQGLVTEVFP (172 aa)) is ECH-like. An N6-succinyllysine modification is found at lysine 161. 198–202 (SGNDL) serves as a coordination point for substrate. Position 289 is an N6-succinyllysine (lysine 289). Positions 392-394 (SKL) match the Microbody targeting signal motif.

In the C-terminal section; belongs to the enoyl-CoA hydratase/isomerase family. As to expression, abundant in heart, skeletal muscle and liver. Expressed in CD34(+) T-cells and CD34(+) bone marrow cells.

The protein resides in the mitochondrion. It localises to the peroxisome matrix. The enzyme catalyses a (3Z)-enoyl-CoA = a 4-saturated (2E)-enoyl-CoA. It carries out the reaction (3Z)-octenoyl-CoA = (2E)-octenoyl-CoA. The catalysed reaction is a (3E)-enoyl-CoA = a 4-saturated (2E)-enoyl-CoA. It catalyses the reaction (2E)-tetradecenoyl-CoA = (3Z)-tetradecenoyl-CoA. The enzyme catalyses (3E)-tetradecenoyl-CoA = (2E)-tetradecenoyl-CoA. It carries out the reaction (3E)-octenoyl-CoA = (2E)-octenoyl-CoA. The catalysed reaction is (3E)-nonenoyl-CoA = (2E)-nonenoyl-CoA. The protein operates within lipid metabolism; fatty acid beta-oxidation. Able to isomerize both 3-cis and 3-trans double bonds into the 2-trans form in a range of enoyl-CoA species. Has a preference for 3-trans substrates. This chain is Enoyl-CoA delta isomerase 2 (ECI2), found in Homo sapiens (Human).